The chain runs to 215 residues: Cytochrome b6 (215 aa).

Residues 32–52 (IFYCLGGITLTCFLVQVATGF) form a helical membrane-spanning segment. Cysteine 35 contributes to the heme c binding site. 2 residues coordinate heme b: histidine 86 and histidine 100. 3 helical membrane passes run 90–110 (ASMM…TGGF), 116–136 (LTWV…VTGY), and 186–206 (LHTF…FPMI). Heme b is bound by residues histidine 187 and histidine 202.

It belongs to the cytochrome b family. PetB subfamily. As to quaternary structure, the 4 large subunits of the cytochrome b6-f complex are cytochrome b6, subunit IV (17 kDa polypeptide, PetD), cytochrome f and the Rieske protein, while the 4 small subunits are PetG, PetL, PetM and PetN. The complex functions as a dimer. Heme b serves as cofactor. Heme c is required as a cofactor.

It is found in the plastid. The protein resides in the chloroplast thylakoid membrane. Its function is as follows. Component of the cytochrome b6-f complex, which mediates electron transfer between photosystem II (PSII) and photosystem I (PSI), cyclic electron flow around PSI, and state transitions. This Jasminum nudiflorum (Winter jasmine) protein is Cytochrome b6.